The primary structure comprises 642 residues: MRTDSKTPLLDTIATPTDLRRLKESDLAQLADELRTETIDAVSVTGGHLGAGLGVVELTVALHYVFDTPHDRLIWDVGHQAYPHKILTGRRDRIRTLRRAGGLSGFTKRSESVYDPFGTAHSSTSISAGLGMAAATTLSGGNNNVIAVIGDGSMSAGMAYEAMNNAGAMHSRLIIILNDNEMSIAPPAGALSAYLARLVSGGTYRTVREAAKQLGRHLPHFIYDRARKTEEFARNFWAGGTMFEELGIYYVGPIDGHNLDHLLPVLKNVRDFKETGPILVHVVTQKGKGYAPAAAASDKYHSVNTFDVVTGVQTKPKANAPSYTRVFADALVKEAERDDKIVAITAAMPGGTGLDVFGKAFPERTFDVGIAEQHAVTFAAGLATEGYRPFCALYSTFLQRGYDQVVHDVAIQNLPVRFAIDRAGLVGADGATHAGSFDVSYLGILPNMVIMAAADEAELVHMVATAAAYDEGPIAFRYPRGEGVGIELPQIGEILDIGRGRIVREGTTVALLSLGTRLAEASKAAEQLASYGISVTVADARFAKPLDLDLVRRLAKNHEVLITIEEGSVGGFGSFVMQALAEEGLLDGTGLKFRSMVLPDTFLDHDKPEKLYAQAGLDAKGIVAKVLATLGRENEAHQSLIA.

Thiamine diphosphate-binding positions include histidine 79 and 120–122; that span reads AHS. Aspartate 151 contacts Mg(2+). Residues 152 to 153, asparagine 180, tyrosine 290, and glutamate 372 contribute to the thiamine diphosphate site; that span reads GS. Asparagine 180 is a binding site for Mg(2+).

It belongs to the transketolase family. DXPS subfamily. In terms of assembly, homodimer. It depends on Mg(2+) as a cofactor. The cofactor is thiamine diphosphate.

The catalysed reaction is D-glyceraldehyde 3-phosphate + pyruvate + H(+) = 1-deoxy-D-xylulose 5-phosphate + CO2. The protein operates within metabolic intermediate biosynthesis; 1-deoxy-D-xylulose 5-phosphate biosynthesis; 1-deoxy-D-xylulose 5-phosphate from D-glyceraldehyde 3-phosphate and pyruvate: step 1/1. Functionally, catalyzes the acyloin condensation reaction between C atoms 2 and 3 of pyruvate and glyceraldehyde 3-phosphate to yield 1-deoxy-D-xylulose-5-phosphate (DXP). This chain is 1-deoxy-D-xylulose-5-phosphate synthase, found in Beijerinckia indica subsp. indica (strain ATCC 9039 / DSM 1715 / NCIMB 8712).